A 78-amino-acid polypeptide reads, in one-letter code: Alpha-neurotoxin homolog 7 (78 aa).

An N-terminal signal peptide occupies residues 1-21 (MKTLLLTLVVVTIVCLDFGYT). Cystine bridges form between C24–C42, C37–C57, C59–C70, and C71–C76.

This sequence belongs to the three-finger toxin family. Short-chain subfamily. Orphan group XII sub-subfamily. Expressed by the venom gland.

The protein localises to the secreted. This is Alpha-neurotoxin homolog 7 from Micrurus corallinus (Brazilian coral snake).